The sequence spans 481 residues: Serine/threonine-protein kinase US3 (481 aa).

The segment at 12 to 63 is disordered; sequence RPDKRQEASVPPETNTAPAFPASTFYTPAEDAYLAPGPPETIHPSRPPSPGE. The segment covering 47–61 has biased composition (pro residues); sequence PGPPETIHPSRPPSP. Residues 191–478 enclose the Protein kinase domain; that stretch reads FAIHGALIPG…AAELLRLPLF (288 aa). ATP is bound by residues 197–205 and lysine 220; that span reads LIPGSEGCV. Aspartate 305 serves as the catalytic Proton acceptor.

This sequence belongs to the protein kinase superfamily. Ser/Thr protein kinase family. In terms of assembly, interacts with host LAT; this interaction prevents LAT activation of TRAF6. Post-translationally, phosphorylated by UL13; this phosphorylation regulates subsequent phosphorylation of UL31 and UL34 by US3. Autophosphorylated.

The protein resides in the host cytoplasm. It is found in the host nucleus. It carries out the reaction L-seryl-[protein] + ATP = O-phospho-L-seryl-[protein] + ADP + H(+). The enzyme catalyses L-threonyl-[protein] + ATP = O-phospho-L-threonyl-[protein] + ADP + H(+). Its function is as follows. Multifunctional serine/threonine kinase that plays a role in several processes including egress of virus particles from the nucleus, modulation of the actin cytoskeleton and inhibition of host immune response. Phosphorylates UL31 and UL34, two critical regulators of capsid budding from nucleus to endoplasmic reticulum, thereby facilitating virion egress. Modulates and redistributes host components of the nuclear envelope, including LMNA, emerin/EMD and the nuclear matrix protein MATR3. In turn, facilitates nuclear pore impairment and capsid release through impaired nuclear envelope. Phosphorylates envelope glycoprotein B (gB), probably to direct it to the cell surface. Promotes virus intracellular spread by restructuring host cell cytoskeleton. Blocks host apoptosis to extend cell survival and allow efficient viral replication. Promotes viral gene expression by phosphorylating host HDAC2 to reduce viral genome silencing. Strongly inhibits TCR-activated signal transduction in T-cells by reducing the ubiquitination of LAT and TRAF6, leading to a suboptimal activation of LAT. Subverts host antiviral innate immunity by inhibiting type I interferon production through hyperphosphorylation of beta-catenin/CTNNB1. In addition, phosphorylates the RNA sensor RIGI and the transcription factor IRF3 to prevent the RLR-mediated antiviral signaling pathway. Hyperphosphorylates host RELA and thereby dampens NF-kappa-B signaling. Acts as an immunoevasin partly responsible for inhibition of MR1 expression and antigen presentation in response to bacterial infection. The polypeptide is Serine/threonine-protein kinase US3 (US3) (Human herpesvirus 2 (strain HG52) (HHV-2)).